A 242-amino-acid polypeptide reads, in one-letter code: Ribose-5-phosphate isomerase A (242 aa).

Substrate contacts are provided by residues 39–42 (SGST), 95–98 (DGAD), and 108–111 (KGGG). Glutamate 117 functions as the Proton acceptor in the catalytic mechanism. A substrate-binding site is contributed by lysine 135.

It belongs to the ribose 5-phosphate isomerase family. Homodimer.

It carries out the reaction aldehydo-D-ribose 5-phosphate = D-ribulose 5-phosphate. The protein operates within carbohydrate degradation; pentose phosphate pathway; D-ribose 5-phosphate from D-ribulose 5-phosphate (non-oxidative stage): step 1/1. Functionally, catalyzes the reversible conversion of ribose-5-phosphate to ribulose 5-phosphate. The chain is Ribose-5-phosphate isomerase A from Chlamydia trachomatis serovar D (strain ATCC VR-885 / DSM 19411 / UW-3/Cx).